The chain runs to 958 residues: SLIT and NTRK-like protein 5 (958 aa).

Positions Met1–Thr40 are cleaved as a signal peptide. Residues Ile41–Ser664 are Extracellular-facing. LRR repeat units lie at residues Pro82–Asn103, Gly106–Gly127, Gly130–Gly151, Asn154–Lys175, Leu178–Phe199, and Pro201–Gln222. N-linked (GlcNAc...) asparagine glycosylation occurs at Asn103. The region spanning Asn235 to Arg286 is the LRRCT 1 domain. The segment at Ala317–Tyr358 is disordered. In terms of domain architecture, LRRNT spans Gln365 to Lys407. LRR repeat units lie at residues Asn410 to Glu431, Gly434 to Asp455, Asn458 to Gly479, Ser482 to Pro503, Asn506 to Gly527, and Thr529 to Asp550. The LRRCT 2 domain maps to Asn563–Asp614. Residue Asn644 is glycosylated (N-linked (GlcNAc...) asparagine). A helical transmembrane segment spans residues Val665–Phe685. Residues Val686–Phe958 lie on the Cytoplasmic side of the membrane. The segment at Asn789–Leu844 is disordered. The segment covering Gln797–Gln812 has biased composition (pro residues).

It belongs to the SLITRK family. In terms of tissue distribution, expressed predominantly in the cerebral cortex of the brain but also at low levels in the spinal cord and medulla.

The protein resides in the membrane. Functionally, suppresses neurite outgrowth. The protein is SLIT and NTRK-like protein 5 (SLITRK5) of Homo sapiens (Human).